We begin with the raw amino-acid sequence, 379 residues long: UDP-4-amino-4-deoxy-L-arabinose--oxoglutarate aminotransferase (379 aa).

Position 182 is an N6-(pyridoxal phosphate)lysine (Lys-182).

The protein belongs to the DegT/DnrJ/EryC1 family. ArnB subfamily. Homodimer. It depends on pyridoxal 5'-phosphate as a cofactor.

The catalysed reaction is UDP-4-amino-4-deoxy-beta-L-arabinose + 2-oxoglutarate = UDP-beta-L-threo-pentopyranos-4-ulose + L-glutamate. Its pathway is nucleotide-sugar biosynthesis; UDP-4-deoxy-4-formamido-beta-L-arabinose biosynthesis; UDP-4-deoxy-4-formamido-beta-L-arabinose from UDP-alpha-D-glucuronate: step 2/3. It functions in the pathway bacterial outer membrane biogenesis; lipopolysaccharide biosynthesis. In terms of biological role, catalyzes the conversion of UDP-4-keto-arabinose (UDP-Ara4O) to UDP-4-amino-4-deoxy-L-arabinose (UDP-L-Ara4N). The modified arabinose is attached to lipid A and is required for resistance to polymyxin and cationic antimicrobial peptides. The chain is UDP-4-amino-4-deoxy-L-arabinose--oxoglutarate aminotransferase from Escherichia coli O157:H7.